A 336-amino-acid polypeptide reads, in one-letter code: D-aspartate oxidase (336 aa).

Positions 34, 35, 41, 42, 304, 308, and 309 each coordinate FAD. Positions Ser334–Leu336 match the Microbody targeting signal motif.

It belongs to the DAMOX/DASOX family. Monomer. FAD serves as cofactor.

The protein localises to the peroxisome matrix. It catalyses the reaction D-aspartate + O2 + H2O = oxaloacetate + H2O2 + NH4(+). The enzyme catalyses D-glutamate + O2 + H2O = H2O2 + 2-oxoglutarate + NH4(+). Functionally, selectively catalyzes the oxidative deamination of acidic amino acids. Suppresses the level of D-aspartate in the brain, an amino acid that can act as an agonist for glutamate receptors. Protects the organism from the toxicity of D-amino acids. May also function in the intestine. This is D-aspartate oxidase from Octopus vulgaris (Common octopus).